Consider the following 611-residue polypeptide: Rho-related BTB domain-containing protein 3 (611 aa).

Positions methionine 1–leucine 175 are rho-like. BTB domains are found at residues valine 254–glutamate 356 and alanine 420–glycine 487. An interaction with Rab9 region spans residues alanine 420–methionine 611.

Interacts with RAB9A and RAB9B (at lower level compared to RAB9A-binding). Interacts with M6PRBP1/TIP47. Ubiquitous. Highly expressed in neural and cardiac tissues, pancreas, placenta and testis.

It is found in the golgi apparatus. Functionally, rab9-regulated ATPase required for endosome to Golgi transport. Involved in transport vesicle docking at the Golgi complex, possibly by participating in release M6PRBP1/TIP47 from vesicles to permit their efficient docking and fusion at the Golgi. Specifically binds Rab9, but not other Rab proteins. Has low intrinsic ATPase activity due to autoinhibition, which is relieved by Rab9. The protein is Rho-related BTB domain-containing protein 3 (RHOBTB3) of Homo sapiens (Human).